Consider the following 144-residue polypeptide: uncharacterized protein (144 aa).

Asn-14 and Asn-15 each carry an N-linked (GlcNAc...) asparagine glycan. A helical membrane pass occupies residues 90-110 (FSWFIFGLFIACLLLCITLVL). The interval 120 to 144 (NKATEVVPSSNIDDEEKQLSLSDMI) is disordered.

The protein resides in the membrane. This is an uncharacterized protein from Saccharomyces cerevisiae (strain ATCC 204508 / S288c) (Baker's yeast).